The primary structure comprises 79 residues: Small ribosomal subunit protein bS18 (79 aa).

It belongs to the bacterial ribosomal protein bS18 family. As to quaternary structure, part of the 30S ribosomal subunit. Forms a tight heterodimer with protein bS6.

In terms of biological role, binds as a heterodimer with protein bS6 to the central domain of the 16S rRNA, where it helps stabilize the platform of the 30S subunit. The chain is Small ribosomal subunit protein bS18 from Streptococcus agalactiae serotype Ia (strain ATCC 27591 / A909 / CDC SS700).